The sequence spans 358 residues: Uroporphyrinogen decarboxylase (358 aa).

Residues 27–31 (RQAGR), D77, Y154, S209, and H327 each bind substrate.

Belongs to the uroporphyrinogen decarboxylase family. In terms of assembly, homodimer.

Its subcellular location is the cytoplasm. It catalyses the reaction uroporphyrinogen III + 4 H(+) = coproporphyrinogen III + 4 CO2. It participates in porphyrin-containing compound metabolism; protoporphyrin-IX biosynthesis; coproporphyrinogen-III from 5-aminolevulinate: step 4/4. In terms of biological role, catalyzes the decarboxylation of four acetate groups of uroporphyrinogen-III to yield coproporphyrinogen-III. This is Uroporphyrinogen decarboxylase from Azoarcus sp. (strain BH72).